The chain runs to 108 residues: Protein translation factor SUI1 (108 aa).

A disordered region spans residues 1 to 20; it reads MSIENLKSFDPFADTGDDEA.

This sequence belongs to the SUI1 family.

In terms of biological role, additional factor that functions in concert with eIF-2 and the initiator tRNA in directing the ribosome to the proper start site of translation. This Eremothecium gossypii (strain ATCC 10895 / CBS 109.51 / FGSC 9923 / NRRL Y-1056) (Yeast) protein is Protein translation factor SUI1 (SUI1A).